A 487-amino-acid polypeptide reads, in one-letter code: MASTADGDVGETLGQMRGLWPGVEDLSLNKLATSLGASEQALRLIFSIFLGYPLALFYRHYLFYKDSYLIHLFHAFSGLSIAYFNFGHQFYHSLLCVVLQFLILRLMGRTITAVFTTLCFQMAYLLAGYYYTATGDYDIKWTMPHCVLTLKLIGLSIDYYDGGKDRNSLSSEQQKYAILGVPSLLEVAGFSYFYGAFLVGPQFSMNHYMKLVKGQLTDVPGKMPNSTIPALKRLSLGLVYLVGYTLLSPHITEDYLLTEDYDTRPFWFRCMYMLIWGKFVLYKYVTCWLVTEGVCILSGLGFNGFEENGTVKWDACANMKVWLFETTPRFTGTIASFNINTNAWVARYIFKRLKFLGNKELSQGLSLLFLALWHGLHSGYLICFQMEFLIVIVEKQATNLIRDSPALSSLASITALQPFYYLVQQTIHWLFMGYSMTAFCLFTWDKWLKVYRSIYFLGHVFFLSLLFTLPYVYKAMVPRKEKLKKRE.

Ala-2 is subject to N-acetylalanine. The next 6 membrane-spanning stretches (helical) occupy residues 44–64 (LIFSIFLGYPLALFYRHYLFY), 67–87 (SYLIHLFHAFSGLSIAYFNFG), 111–131 (ITAVFTTLCFQMAYLLAGYYY), 178–198 (ILGVPSLLEVAGFSYFYGAFL), 236–256 (LGLVYLVGYTLLSPHITEDYL), and 285–305 (VTCWLVTEGVCILSGLGFNGF). The N-linked (GlcNAc...) asparagine glycan is linked to Asn-308. Residues Asn-338 and His-374 contribute to the active site. The next 3 helical transmembrane spans lie at 364–384 (GLSLLFLALWHGLHSGYLICF), 422–442 (LVQQTIHWLFMGYSMTAFCLF), and 453–473 (SIYFLGHVFFLSLLFTLPYVY). The Di-lysine motif motif lies at 484–487 (KKRE).

The protein belongs to the membrane-bound acyltransferase family.

It is found in the endoplasmic reticulum membrane. The catalysed reaction is a 1-acyl-sn-glycero-3-phosphocholine + an acyl-CoA = a 1,2-diacyl-sn-glycero-3-phosphocholine + CoA. It carries out the reaction a 1-acyl-sn-glycero-3-phosphoethanolamine + an acyl-CoA = a 1,2-diacyl-sn-glycero-3-phosphoethanolamine + CoA. It catalyses the reaction a 1-acyl-sn-glycero-3-phospho-L-serine + an acyl-CoA = a 1,2-diacyl-sn-glycero-3-phospho-L-serine + CoA. The enzyme catalyses (9Z,12Z)-octadecadienoyl-CoA + a 1-acyl-sn-glycero-3-phosphocholine = 1-acyl-2-(9Z,12Z)-octadecadienoyl-sn-glycero-3-phosphocholine + CoA. The catalysed reaction is (5Z,8Z,11Z,14Z)-eicosatetraenoyl-CoA + a 1-acyl-sn-glycero-3-phosphocholine = 1-acyl-2-(5Z,8Z,11Z,14Z-eicosatetraenoyl)-sn-glycero-3-phosphocholine + CoA. It carries out the reaction dodecanoyl-CoA + 1-hexadecanoyl-sn-glycero-3-phosphocholine = 1-hexadecanoyl-2-dodecanoyl-sn-glycero-3-phosphocholine + CoA. It catalyses the reaction octadecanoyl-CoA + 1-hexadecanoyl-sn-glycero-3-phosphocholine = 1-hexadecanoyl-2-octadecanoyl-sn-glycero-3-phosphocholine + CoA. The enzyme catalyses 1-dodecanoyl-sn-glycero-3-phosphocholine + hexadecanoyl-CoA = 1-dodecanoyl-2-hexadecanoyl-sn-glycero-3-phosphocholine + CoA. The catalysed reaction is 1-tetradecanoyl-sn-glycero-3-phosphocholine + hexadecanoyl-CoA = 1-tetradecanoyl-2-hexadecanoyl-sn-glycero-3-phosphocholine + CoA. It carries out the reaction 1-hexadecanoyl-sn-glycero-3-phosphocholine + hexadecanoyl-CoA = 1,2-dihexadecanoyl-sn-glycero-3-phosphocholine + CoA. It catalyses the reaction 1-octadecanoyl-sn-glycero-3-phosphocholine + hexadecanoyl-CoA = 1-octadecanoyl-2-hexadecanoyl-sn-glycero-3-phosphocholine + CoA. The enzyme catalyses 1-(9Z-octadecenoyl)-sn-glycero-3-phosphocholine + hexadecanoyl-CoA = 1-(9Z-octadecenoyl)-2-hexadecanoyl-sn-glycero-3-phosphocholine + CoA. The catalysed reaction is (9Z)-hexadecenoyl-CoA + 1-hexadecanoyl-sn-glycero-3-phosphocholine = 1-hexadecanoyl-2-(9Z-hexadecenoyl)-sn-glycero-3-phosphocholine + CoA. It carries out the reaction 1-hexadecanoyl-sn-glycero-3-phosphocholine + (9Z)-octadecenoyl-CoA = 1-hexadecanoyl-2-(9Z-octadecenoyl)-sn-glycero-3-phosphocholine + CoA. It catalyses the reaction (9Z,12Z)-octadecadienoyl-CoA + 1-hexadecanoyl-sn-glycero-3-phosphocholine = 1-hexadecanoyl-2-(9Z,12Z-octadecadienoyl)-sn-glycero-3-phosphocholine + CoA. The enzyme catalyses 1-dodecanoyl-sn-glycero-3-phosphocholine + (5Z,8Z,11Z,14Z)-eicosatetraenoyl-CoA = 1-dodecanoyl-2-(5Z,8Z,11Z,14Z)-eicosatetraenoyl-sn-glycero-3-phosphocholine + CoA. The catalysed reaction is (5Z,8Z,11Z,14Z)-eicosatetraenoyl-CoA + 1-hexadecanoyl-sn-glycero-3-phosphocholine = 1-hexadecanoyl-2-(5Z,8Z,11Z,14Z-eicosatetraenoyl)-sn-glycero-3-phosphocholine + CoA. It carries out the reaction 1-octadecanoyl-sn-glycero-3-phosphocholine + (5Z,8Z,11Z,14Z)-eicosatetraenoyl-CoA = 1-octadecanoyl-2-(5Z,8Z,11Z,14Z-eicosatetraenoyl)-sn-glycero-3-phosphocholine + CoA. It catalyses the reaction 1-eicosanoyl-sn-glycero-3-phosphocholine + (5Z,8Z,11Z,14Z)-eicosatetraenoyl-CoA = 1-eicosanoyl-2-(5Z,8Z,11Z,14Z)-eicosatetraenoyl-sn-glycero-3-phosphocholine + CoA. The enzyme catalyses 1-(9Z-octadecenoyl)-sn-glycero-3-phosphocholine + (9Z)-octadecenoyl-CoA = 1,2-di-(9Z-octadecenoyl)-sn-glycero-3-phosphocholine + CoA. The catalysed reaction is 1-(9Z-octadecenoyl)-sn-glycero-3-phosphocholine + (9Z,12Z)-octadecadienoyl-CoA = 1-(9Z)-octadecenoyl-2-(9Z,12Z)-octadecadienoyl-sn-glycero-3-phosphocholine + CoA. It carries out the reaction 1-(9Z-octadecenoyl)-sn-glycero-3-phosphocholine + (5Z,8Z,11Z,14Z)-eicosatetraenoyl-CoA = 1-(9Z)-octadecenoyl-2-(5Z,8Z,11Z,14Z)-icosatetraenoyl-sn-glycero-3-phosphocholine + CoA. It catalyses the reaction a 1-acyl-sn-glycero-3-phosphoethanolamine + (9Z,12Z)-octadecadienoyl-CoA = 1-acyl-2-(9Z,12Z)-octadecadienoyl-sn-glycero-3-phosphoethanolamine + CoA. The enzyme catalyses 1-(9Z-octadecenoyl)-sn-glycero-3-phosphoethanolamine + (9Z,12Z)-octadecadienoyl-CoA = 1-(9Z)-octadecenoyl-2-(9Z,12Z)-octadecadienoyl-sn-glycero-3-phosphoethanolamine + CoA. The catalysed reaction is 1-(10Z-heptadecenoyl)-sn-glycero-3-phosphoethanolamine + (9Z,12Z)-octadecadienoyl-CoA = 1-(10Z-heptadecenoyl)-2-(9Z,12Z-octadecadienoyl)-sn-glycero-3-phosphoethanolamine + CoA. It carries out the reaction a 1-acyl-sn-glycero-3-phosphoethanolamine + (5Z,8Z,11Z,14Z)-eicosatetraenoyl-CoA = 1-acyl-2-(5Z,8Z,11Z,14Z)-eicosatetraenoyl-sn-glycero-3-phosphoethanolamine + CoA. It catalyses the reaction 1-hexadecanoyl-sn-glycero-3-phosphoethanolamine + (5Z,8Z,11Z,14Z)-eicosatetraenoyl-CoA = 1-hexadecanoyl-2-(5Z,8Z,11Z,14Z-eicosatetraenoyl)-sn-glycero-3-phosphoethanolamine + CoA. The enzyme catalyses 1-(9Z-octadecenoyl)-sn-glycero-3-phosphoethanolamine + (5Z,8Z,11Z,14Z)-eicosatetraenoyl-CoA = 1-(9Z)-octadecenoyl-2-(5Z,8Z,11Z,14Z)-eicosatetraenoyl-sn-glycero-3-phosphoethanolamine + CoA. The catalysed reaction is 1-(10Z-heptadecenoyl)-sn-glycero-3-phosphoethanolamine + (5Z,8Z,11Z,14Z)-eicosatetraenoyl-CoA = 1-(10Z-heptadecenoyl)-2-(5Z,8Z,11Z,14Z-eicosatetraenoyl)-sn-glycero-3-phosphoethanolamine + CoA. It carries out the reaction a 1-O-(1Z-alkenyl)-sn-glycero-3-phosphoethanolamine + (5Z,8Z,11Z,14Z)-eicosatetraenoyl-CoA = 1-O-(1Z)-alkenyl-2-(5Z,8Z,11Z,14Z)-eicosatetraenoyl-sn-glycero-3-phosphoethanolamine + CoA. It catalyses the reaction a 1-acyl-sn-glycero-3-phospho-L-serine + (9Z,12Z)-octadecadienoyl-CoA = 1-acyl-2-(9Z,12Z-octadecadienoyl)-sn-glycero-3-phospho-L-serine + CoA. The enzyme catalyses a 1-acyl-sn-glycero-3-phospho-L-serine + (5Z,8Z,11Z,14Z)-eicosatetraenoyl-CoA = 1-acyl-2-(5Z,8Z,11Z,14Z-eicosatetraenoyl)-sn-glycero-3-phospho-L-serine + CoA. The catalysed reaction is 1-hexadecanoyl-sn-glycero-3-phospho-L-serine + (9Z)-octadecenoyl-CoA = 1-hexadecanoyl-2-(9Z-octadecenoyl)-sn-glycero-3-phospho-L-serine + CoA. It carries out the reaction 1-(9Z-octadecenoyl)-sn-glycero-3-phospho-L-serine + (9Z)-octadecenoyl-CoA = 1,2-di-(9Z)-octadecenoyl-sn-glycero-3-phospho-L-serine + CoA. It catalyses the reaction 1-hexadecanoyl-sn-glycero-3-phospho-L-serine + (9Z,12Z)-octadecadienoyl-CoA = 1-hexadecanoyl-2-(9Z,12Z-octadecadienoyl)-sn-glycero-3-phospho-L-serine + CoA. The enzyme catalyses 1-(9Z-octadecenoyl)-sn-glycero-3-phospho-L-serine + (9Z,12Z)-octadecadienoyl-CoA = 1-(9Z-octadecenoyl)-2-(9Z,12Z-octadienoyl)-sn-glycero-3-phospho-L-serine + CoA. The catalysed reaction is 1-hexadecanoyl-sn-glycero-3-phospho-L-serine + (5Z,8Z,11Z,14Z)-eicosatetraenoyl-CoA = 1-hexadecanoyl-2-(5Z,8Z,11Z,14Z-eicosatetraenoyl)-sn-glycero-3-phospho-L-serine + CoA. It carries out the reaction 1-(9Z-octadecenoyl)-sn-glycero-3-phospho-L-serine + (5Z,8Z,11Z,14Z)-eicosatetraenoyl-CoA = 1-(9Z-octadecenoyl)-2-(5Z,8Z,11Z,14Z-eicosatetraenoyl)-sn-glycero-3-phospho-L-serine + CoA. It participates in lipid metabolism; phospholipid metabolism. In terms of biological role, lysophospholipid O-acyltransferase (LPLAT) that catalyzes the reacylation step of the phospholipid remodeling process also known as the Lands cycle. Catalyzes transfer of the fatty acyl chain from fatty acyl-CoA to 1-acyl lysophospholipid to form various classes of phospholipids. Converts 1-acyl lysophosphatidylcholine (LPC) into phosphatidylcholine (PC) (LPCAT activity), 1-acyl lysophosphatidylserine (LPS) into phosphatidylserine (PS) (LPSAT activity) and 1-acyl lysophosphatidylethanolamine (LPE) into phosphatidylethanolamine (PE) (LPEAT activity). Favors polyunsaturated fatty acyl-CoAs as acyl donors compared to saturated fatty acyl-CoAs. Has higher activity for LPC acyl acceptors compared to LPEs and LPSs. Can also transfer the fatty acyl chain from fatty acyl-CoA to 1-O-alkyl lysophospholipid or 1-O-alkenyl lysophospholipid with lower efficiency. Acts as a major LPC O-acyltransferase in liver and intestine. As a component of the liver X receptor/NR1H3 or NR1H2 signaling pathway, mainly catalyzes the incorporation of arachidonate into PCs of endoplasmic reticulum (ER) membranes, increasing membrane dynamics and enabling triacylglycerols transfer to nascent very low-density lipoprotein (VLDL) particles. Promotes processing of sterol regulatory protein SREBF1 in hepatocytes, likely by facilitating the translocation of SREBF1-SCAP complex from ER to the Golgi apparatus. Participates in mechanisms by which the liver X receptor/NR1H3 or NR1H2 signaling pathway counteracts lipid-induced ER stress response and inflammation. Down-regulates hepatic inflammation by limiting arachidonic acid availability for synthesis of inflammatory eicosanoids, such as prostaglandins. In enterocytes, acts as a component of a gut-brain feedback loop that coordinates dietary lipid absorption and food intake. Regulates the abundance of PCs containing linoleate and arachidonate in enterocyte membranes, enabling passive diffusion of fatty acids and cholesterol across the membrane for efficient chylomicron assembly. In the intestinal crypt, acts as a component of dietary-responsive phospholipid-cholesterol axis, regulating the biosynthesis of cholesterol and its mitogenic effects on intestinal stem cells. This Rattus norvegicus (Rat) protein is Lysophospholipid acyltransferase 5 (Lpcat3).